A 509-amino-acid chain; its full sequence is Ribonuclease Y (509 aa).

A helical transmembrane segment spans residues 5–25 (IIILLSVFCGIFFICFIICSS). Residues 199 to 259 (TTNIVKLPSD…IRREIATRTL (61 aa)) enclose the KH domain. Residues 325-418 (VLAHSIEVAK…VAIADSISAS (94 aa)) enclose the HD domain.

This sequence belongs to the RNase Y family.

Its subcellular location is the cell membrane. Functionally, endoribonuclease that initiates mRNA decay. This chain is Ribonuclease Y, found in Mycoplasma mycoides subsp. mycoides SC (strain CCUG 32753 / NCTC 10114 / PG1).